Reading from the N-terminus, the 616-residue chain is Dihydroxy-acid dehydratase (616 aa).

Mg(2+) is bound at residue Asp-81. Cys-122 contacts [2Fe-2S] cluster. Mg(2+) is bound by residues Asp-123 and Lys-124. Residue Lys-124 is modified to N6-carboxylysine. Residue Cys-195 coordinates [2Fe-2S] cluster. Glu-491 serves as a coordination point for Mg(2+). Ser-517 serves as the catalytic Proton acceptor.

This sequence belongs to the IlvD/Edd family. As to quaternary structure, homodimer. It depends on [2Fe-2S] cluster as a cofactor. The cofactor is Mg(2+).

It catalyses the reaction (2R)-2,3-dihydroxy-3-methylbutanoate = 3-methyl-2-oxobutanoate + H2O. The catalysed reaction is (2R,3R)-2,3-dihydroxy-3-methylpentanoate = (S)-3-methyl-2-oxopentanoate + H2O. It participates in amino-acid biosynthesis; L-isoleucine biosynthesis; L-isoleucine from 2-oxobutanoate: step 3/4. Its pathway is amino-acid biosynthesis; L-valine biosynthesis; L-valine from pyruvate: step 3/4. Functionally, functions in the biosynthesis of branched-chain amino acids. Catalyzes the dehydration of (2R,3R)-2,3-dihydroxy-3-methylpentanoate (2,3-dihydroxy-3-methylvalerate) into 2-oxo-3-methylpentanoate (2-oxo-3-methylvalerate) and of (2R)-2,3-dihydroxy-3-methylbutanoate (2,3-dihydroxyisovalerate) into 2-oxo-3-methylbutanoate (2-oxoisovalerate), the penultimate precursor to L-isoleucine and L-valine, respectively. The protein is Dihydroxy-acid dehydratase of Shigella boydii serotype 4 (strain Sb227).